Reading from the N-terminus, the 528-residue chain is MTVDALTQPHHLLSLAWNDTQQHGSWFAPLVTTSAGLLCLLLYLCSSGRRSELPVFNPKTWWELTTMRAKRDFDANAPSWIESWFSQNDKPIRFIVDSGYCTILPSSMADEFRKMKELCMYKFLGTDFHSHLPGFDGFKEVTRDAHLITKVVMNQFQTQAPKYVKPLANEASGIITDIFGDSNEWHTVPVYNQCLDLVTRTVTFIMVGSKLAHNEEWLDIAKHHAVTMAIQARQLRLWPVILRPLVHWLEPQGAKLRAQVRRARQLLDPIIQERRAERDSCLAKGIEPPRYVDSIQWFEDTAKGKWYDAAGAQLAMDFAGIYGTSDLLIGGLVDIVRHPHLLEPLRDEIRTVIGQGGWTPASLYKLKLLDSCLKESQRVKPVECATMRSYALQDVTFSNGTFIPKGELVAVAADRMSNPEVWPEPAKYDPYRYMRLREDPAKAFSAQLENTNGDHIGFGWHPRACPGRFFASKEIKMMLAYLLIRYDWKVVPNEPLQYYRHSFSVRIHPTTKLMMRRRDEDIRLPGSL.

Residues 1–23 (MTVDALTQPHHLLSLAWNDTQQH) are Cytoplasmic-facing. A helical; Signal-anchor for type II membrane protein transmembrane segment spans residues 24-44 (GSWFAPLVTTSAGLLCLLLYL). The Lumenal segment spans residues 45–528 (CSSGRRSELP…DEDIRLPGSL (484 aa)). N-linked (GlcNAc...) asparagine glycosylation occurs at asparagine 399. Cysteine 465 lines the heme pocket.

The protein belongs to the cytochrome P450 family. The cofactor is heme.

It is found in the membrane. The protein localises to the endoplasmic reticulum membrane. The enzyme catalyses dihydromonacolin L carboxylate + reduced [NADPH--hemoprotein reductase] + O2 = monacolin L carboxylate + oxidized [NADPH--hemoprotein reductase] + 2 H2O + H(+). The catalysed reaction is monacolin L carboxylate + reduced [NADPH--hemoprotein reductase] + O2 = monacolin J carboxylate + oxidized [NADPH--hemoprotein reductase] + H2O + H(+). The protein operates within polyketide biosynthesis; lovastatin biosynthesis. In terms of biological role, dihydromonacolin L monooxygenase; part of the gene cluster that mediates the biosynthesis of lovastatin (also known as mevinolin, mevacor or monacolin K), a hypolipidemic inhibitor of (3S)-hydroxymethylglutaryl-coenzyme A (HMG-CoA) reductase (HMGR). The first step in the biosynthesis of lovastatin is the production of dihydromonacolin L acid by the lovastatin nonaketide synthase lovB and the trans-acting enoyl reductase lovC via condensation of one acetyl-CoA unit and 8 malonyl-CoA units. Dihydromonacolin L acid is released from lovB by the thioesterase lovG. Next, dihydromonacolin L acid is oxidized by the dihydromonacolin L monooxygenase lovA twice to form monacolin J acid. The 2-methylbutyrate moiety of lovastatin is synthesized by the lovastatin diketide synthase lovF via condensation of one acetyl-CoA unit and one malonyl-CoA unit. Finally, the covalent attachment of this moiety to monacolin J acid is catalyzed by the transesterase lovD to yield lovastatin. LovD has broad substrate specificity and can also convert monacolin J to simvastatin using alpha-dimethylbutanoyl-S-methyl-3-mercaptopropionate (DMB-S-MMP) as the thioester acyl donor, and can also catalyze the reverse reaction and function as hydrolase in vitro. LovD has much higher activity with LovF-bound 2-methylbutanoate than with free diketide substrates. This chain is Dihydromonacolin L monooxygenase LovA, found in Aspergillus terreus (strain NIH 2624 / FGSC A1156).